We begin with the raw amino-acid sequence, 153 residues long: MSEQNNTEMSFQIQRIYTKDISFEAPNAPAVFQKEWQPEVKLDLDTASNQLADGVFEVVLRVTVTATMGEETAFLCEVQQAGIFTIAGIDGTQMAHCLGAYCPNILFPYARECITNLVARGTFPQLNLAPVNFDALFMSYLQQQAGEEPTQEA.

It belongs to the SecB family. As to quaternary structure, homotetramer, a dimer of dimers. One homotetramer interacts with 1 SecA dimer.

The protein resides in the cytoplasm. One of the proteins required for the normal export of preproteins out of the cell cytoplasm. It is a molecular chaperone that binds to a subset of precursor proteins, maintaining them in a translocation-competent state. It also specifically binds to its receptor SecA. The polypeptide is Protein-export protein SecB (Edwardsiella ictaluri (strain 93-146)).